Here is a 390-residue protein sequence, read N- to C-terminus: MRSISVLGATGSVGESAFDLLMGAGGPERFRTVALTGGANVARLAQMARALRAELAVTAWPERLADLRAALAGSGIEAAAGPQAVAEAAARPADWTLSAIVGAAGLPPGLEVLNRGGTLALANKETLVAAGPLVMARARETGARILPVDSEHSAIFQALHGENLDSVEHVTITASGGAFRDWPLERLARATVAEASRHPNWDMGQRITIDSASMFNKALEVIEAHEFFGLGVDRLRVLVHPQSIIHAMVTHRDGGSIAHLGAPDMRHAIGYALNWPARAALPVPALDLAALGSLTFAQPDEVRWPALRLAREAIGAGGAAGAVLNAAKEQALDDFIAGRIRFTDMAPAVEHALALAAREAGFAQSPRDLGEVLHWDDFARRAAAQWQGAA.

NADPH is bound by residues Thr-10, Gly-11, Ser-12, Val-13, Gly-38, Asn-40, and Asn-123. A 1-deoxy-D-xylulose 5-phosphate-binding site is contributed by Lys-124. Glu-125 is an NADPH binding site. A Mn(2+)-binding site is contributed by Asp-149. Residues Ser-150, Glu-151, Ser-175, and His-198 each contribute to the 1-deoxy-D-xylulose 5-phosphate site. A Mn(2+)-binding site is contributed by Glu-151. Gly-204 contributes to the NADPH binding site. 1-deoxy-D-xylulose 5-phosphate-binding residues include Ser-211, Asn-216, Lys-217, and Glu-220. Glu-220 serves as a coordination point for Mn(2+).

It belongs to the DXR family. The cofactor is Mg(2+). Mn(2+) is required as a cofactor.

The enzyme catalyses 2-C-methyl-D-erythritol 4-phosphate + NADP(+) = 1-deoxy-D-xylulose 5-phosphate + NADPH + H(+). It participates in isoprenoid biosynthesis; isopentenyl diphosphate biosynthesis via DXP pathway; isopentenyl diphosphate from 1-deoxy-D-xylulose 5-phosphate: step 1/6. Catalyzes the NADPH-dependent rearrangement and reduction of 1-deoxy-D-xylulose-5-phosphate (DXP) to 2-C-methyl-D-erythritol 4-phosphate (MEP). In Paracoccus denitrificans (strain Pd 1222), this protein is 1-deoxy-D-xylulose 5-phosphate reductoisomerase.